Consider the following 358-residue polypeptide: Peptide chain release factor 1 (358 aa).

Gln-235 carries the post-translational modification N5-methylglutamine.

This sequence belongs to the prokaryotic/mitochondrial release factor family. In terms of processing, methylated by PrmC. Methylation increases the termination efficiency of RF1.

Its subcellular location is the cytoplasm. Its function is as follows. Peptide chain release factor 1 directs the termination of translation in response to the peptide chain termination codons UAG and UAA. This is Peptide chain release factor 1 from Neisseria meningitidis serogroup C (strain 053442).